Reading from the N-terminus, the 78-residue chain is Putative membrane protein insertion efficiency factor (78 aa).

It belongs to the UPF0161 family.

The protein localises to the cell inner membrane. In terms of biological role, could be involved in insertion of integral membrane proteins into the membrane. In Thiobacillus denitrificans (strain ATCC 25259 / T1), this protein is Putative membrane protein insertion efficiency factor.